The sequence spans 252 residues: Ribosomal RNA small subunit methyltransferase J (252 aa).

S-adenosyl-L-methionine is bound by residues 104-105 (RD), 120-121 (ER), 156-157 (SS), and Asp-174.

It belongs to the methyltransferase superfamily. RsmJ family.

The protein localises to the cytoplasm. It catalyses the reaction guanosine(1516) in 16S rRNA + S-adenosyl-L-methionine = N(2)-methylguanosine(1516) in 16S rRNA + S-adenosyl-L-homocysteine + H(+). In terms of biological role, specifically methylates the guanosine in position 1516 of 16S rRNA. The sequence is that of Ribosomal RNA small subunit methyltransferase J from Yersinia enterocolitica serotype O:8 / biotype 1B (strain NCTC 13174 / 8081).